The chain runs to 177 residues: Ribosome maturation factor RimP (177 aa).

This sequence belongs to the RimP family.

It localises to the cytoplasm. Required for maturation of 30S ribosomal subunits. This chain is Ribosome maturation factor RimP, found in Mycobacterium marinum (strain ATCC BAA-535 / M).